We begin with the raw amino-acid sequence, 301 residues long: Pyridoxal 5'-phosphate synthase subunit PdxS (301 aa).

D31 contributes to the D-ribose 5-phosphate binding site. The active-site Schiff-base intermediate with D-ribose 5-phosphate is K88. G160 serves as a coordination point for D-ribose 5-phosphate. K172 contacts D-glyceraldehyde 3-phosphate. D-ribose 5-phosphate-binding positions include G221 and 242-243; that span reads GS.

The protein belongs to the PdxS/SNZ family. In the presence of PdxT, forms a dodecamer of heterodimers.

The catalysed reaction is aldehydo-D-ribose 5-phosphate + D-glyceraldehyde 3-phosphate + L-glutamine = pyridoxal 5'-phosphate + L-glutamate + phosphate + 3 H2O + H(+). The protein operates within cofactor biosynthesis; pyridoxal 5'-phosphate biosynthesis. Functionally, catalyzes the formation of pyridoxal 5'-phosphate from ribose 5-phosphate (RBP), glyceraldehyde 3-phosphate (G3P) and ammonia. The ammonia is provided by the PdxT subunit. Can also use ribulose 5-phosphate and dihydroxyacetone phosphate as substrates, resulting from enzyme-catalyzed isomerization of RBP and G3P, respectively. The sequence is that of Pyridoxal 5'-phosphate synthase subunit PdxS from Methanosarcina mazei (strain ATCC BAA-159 / DSM 3647 / Goe1 / Go1 / JCM 11833 / OCM 88) (Methanosarcina frisia).